Reading from the N-terminus, the 378-residue chain is tRNA (guanine(26)-N(2))-dimethyltransferase (378 aa).

Positions 4-374 (KEVTEGKVRI…KGYEEIIRCV (371 aa)) constitute a Trm1 methyltransferase domain. Positions 44, 69, 87, 114, and 115 each coordinate S-adenosyl-L-methionine. Zn(2+) is bound by residues cysteine 246, cysteine 249, cysteine 263, and cysteine 266.

It belongs to the class I-like SAM-binding methyltransferase superfamily. Trm1 family.

The catalysed reaction is guanosine(26) in tRNA + 2 S-adenosyl-L-methionine = N(2)-dimethylguanosine(26) in tRNA + 2 S-adenosyl-L-homocysteine + 2 H(+). In terms of biological role, dimethylates a single guanine residue at position 26 of a number of tRNAs using S-adenosyl-L-methionine as donor of the methyl groups. The sequence is that of tRNA (guanine(26)-N(2))-dimethyltransferase from Saccharolobus islandicus (strain Y.G.57.14 / Yellowstone #1) (Sulfolobus islandicus).